Consider the following 540-residue polypeptide: DNA topoisomerase 1 (540 aa).

The region spanning 1–110 (MELFIVESPT…NIKRAVFYEI (110 aa)) is the Toprim domain. Positions 7 and 79 each coordinate Mg(2+). Positions 126 to 536 (NMNLVYAQFA…FMEKIFGKEL (411 aa)) constitute a Topo IA-type catalytic domain. The tract at residues 161-166 (SAGRVQ) is interaction with DNA. Residue Tyr-281 is the O-(5'-phospho-DNA)-tyrosine intermediate of the active site.

The protein belongs to the type IA topoisomerase family. Monomer. Mg(2+) is required as a cofactor.

The catalysed reaction is ATP-independent breakage of single-stranded DNA, followed by passage and rejoining.. Its function is as follows. Releases the supercoiling and torsional tension of DNA, which is introduced during the DNA replication and transcription, by transiently cleaving and rejoining one strand of the DNA duplex. Introduces a single-strand break via transesterification at a target site in duplex DNA. The scissile phosphodiester is attacked by the catalytic tyrosine of the enzyme, resulting in the formation of a DNA-(5'-phosphotyrosyl)-enzyme intermediate and the expulsion of a 3'-OH DNA strand. The free DNA strand then undergoes passage around the unbroken strand, thus removing DNA supercoils. Finally, in the religation step, the DNA 3'-OH attacks the covalent intermediate to expel the active-site tyrosine and restore the DNA phosphodiester backbone. The protein is DNA topoisomerase 1 of Aquifex aeolicus (strain VF5).